We begin with the raw amino-acid sequence, 317 residues long: Protoheme IX farnesyltransferase (317 aa).

A run of 9 helical transmembrane segments spans residues 28–48 (IIPL…HGHI), 53–73 (LLIT…LNCI), 101–121 (LIFA…FVNL), 122–142 (LSAC…THWL), 150–170 (IVIG…AVTG), 178–198 (ILFA…ALMI), 223–243 (IWIY…PFQA), 246–266 (LFYA…AWEL), and 282–302 (YSIL…LPAV).

This sequence belongs to the UbiA prenyltransferase family. Protoheme IX farnesyltransferase subfamily.

It localises to the cell inner membrane. It carries out the reaction heme b + (2E,6E)-farnesyl diphosphate + H2O = Fe(II)-heme o + diphosphate. Its pathway is porphyrin-containing compound metabolism; heme O biosynthesis; heme O from protoheme: step 1/1. Its function is as follows. Converts heme B (protoheme IX) to heme O by substitution of the vinyl group on carbon 2 of heme B porphyrin ring with a hydroxyethyl farnesyl side group. The sequence is that of Protoheme IX farnesyltransferase from Picosynechococcus sp. (strain ATCC 27264 / PCC 7002 / PR-6) (Agmenellum quadruplicatum).